We begin with the raw amino-acid sequence, 119 residues long: Beta-2-microglobulin (119 aa).

Residues Met-1 to Ala-20 form the signal peptide. The region spanning Pro-25–Lys-114 is the Ig-like C1-type domain. Cys-45 and Cys-100 are joined by a disulfide.

Belongs to the beta-2-microglobulin family. In terms of assembly, heterodimer of an alpha chain and a beta chain. Beta-2-microglobulin is the beta-chain of major histocompatibility complex class I molecules.

It localises to the secreted. Functionally, component of the class I major histocompatibility complex (MHC). Involved in the presentation of peptide antigens to the immune system. This is Beta-2-microglobulin (B2M) from Alouatta seniculus (Red howler monkey).